Here is a 396-residue protein sequence, read N- to C-terminus: uncharacterized protein (396 aa).

11 consecutive transmembrane segments (helical) span residues 7–27 (SDDV…SIGL), 36–56 (AVSG…VGVL), 62–82 (VYDT…LFQI), 94–114 (LLFI…LAFF), 159–179 (VVAD…IPAL), 218–238 (IAFN…VSGY), 250–270 (GTLG…IFLF), 285–305 (TFLI…RLIV), 310–330 (LILL…LAAG), 340–360 (ILLA…MAIA), and 367–387 (VAPI…VGTF).

The protein resides in the cell membrane. This is an uncharacterized protein from Bacillus subtilis (strain 168).